The sequence spans 407 residues: 4-hydroxy-3-methylbut-2-en-1-yl diphosphate synthase (ferredoxin) (407 aa).

4 residues coordinate [4Fe-4S] cluster: Cys-316, Cys-319, Cys-350, and Glu-357.

Belongs to the IspG family. It depends on [4Fe-4S] cluster as a cofactor.

It carries out the reaction (2E)-4-hydroxy-3-methylbut-2-enyl diphosphate + 2 oxidized [2Fe-2S]-[ferredoxin] + H2O = 2-C-methyl-D-erythritol 2,4-cyclic diphosphate + 2 reduced [2Fe-2S]-[ferredoxin] + H(+). It functions in the pathway isoprenoid biosynthesis; isopentenyl diphosphate biosynthesis via DXP pathway; isopentenyl diphosphate from 1-deoxy-D-xylulose 5-phosphate: step 5/6. Converts 2C-methyl-D-erythritol 2,4-cyclodiphosphate (ME-2,4cPP) into 1-hydroxy-2-methyl-2-(E)-butenyl 4-diphosphate. In Prochlorococcus marinus (strain SARG / CCMP1375 / SS120), this protein is 4-hydroxy-3-methylbut-2-en-1-yl diphosphate synthase (ferredoxin).